A 124-amino-acid chain; its full sequence is Small ribosomal subunit protein uS12 (124 aa).

At aspartate 89 the chain carries 3-methylthioaspartic acid. The segment at 104-124 is disordered; it reads TQGVKNRGQARSRYGAKKEKK. Residues 111–124 are compositionally biased toward basic residues; sequence GQARSRYGAKKEKK.

This sequence belongs to the universal ribosomal protein uS12 family. As to quaternary structure, part of the 30S ribosomal subunit. Contacts proteins S8 and S17. May interact with IF1 in the 30S initiation complex.

In terms of biological role, with S4 and S5 plays an important role in translational accuracy. Functionally, interacts with and stabilizes bases of the 16S rRNA that are involved in tRNA selection in the A site and with the mRNA backbone. Located at the interface of the 30S and 50S subunits, it traverses the body of the 30S subunit contacting proteins on the other side and probably holding the rRNA structure together. The combined cluster of proteins S8, S12 and S17 appears to hold together the shoulder and platform of the 30S subunit. This Micrococcus luteus (strain ATCC 4698 / DSM 20030 / JCM 1464 / CCM 169 / CCUG 5858 / IAM 1056 / NBRC 3333 / NCIMB 9278 / NCTC 2665 / VKM Ac-2230) (Micrococcus lysodeikticus) protein is Small ribosomal subunit protein uS12.